We begin with the raw amino-acid sequence, 81 residues long: Dermaseptin-S6 (81 aa).

An N-terminal signal peptide occupies residues 1–22; the sequence is MDILKKSLFFILFLGLVSLSIS. A disordered region spans residues 22–49; sequence SEEEKRENEDEEDQEDDEQSEEKRGLWS. Positions 23 to 45 are excised as a propeptide; it reads EEEKRENEDEEDQEDDEQSEEKR. Residues 30 to 41 show a composition bias toward acidic residues; the sequence is EDEEDQEDDEQS. Ile-78 is modified (isoleucine amide). Positions 80 to 81 are excised as a propeptide; the sequence is EQ.

It belongs to the frog skin active peptide (FSAP) family. Dermaseptin subfamily. As to expression, expressed by the skin glands.

It is found in the secreted. Antimicrobial peptide. This chain is Dermaseptin-S6, found in Phyllomedusa sauvagei (Sauvage's leaf frog).